A 701-amino-acid chain; its full sequence is Glycine--tRNA ligase beta subunit (701 aa).

It belongs to the class-II aminoacyl-tRNA synthetase family. Tetramer of two alpha and two beta subunits.

The protein resides in the cytoplasm. The enzyme catalyses tRNA(Gly) + glycine + ATP = glycyl-tRNA(Gly) + AMP + diphosphate. The protein is Glycine--tRNA ligase beta subunit of Helicobacter pylori (strain G27).